The primary structure comprises 799 residues: Transcriptional activator FLO8 (799 aa).

The segment covering 1 to 10 (MSYKVNSSYP) has biased composition (polar residues). Disordered regions lie at residues 1–20 (MSYK…EQPY), 37–68 (TNSE…SDLK), 101–127 (AHLD…QNTF), 255–406 (TTGA…RVNK), 431–503 (NSKS…SVIL), 568–622 (ESGK…PHGF), 644–691 (VSQE…YDFD), and 705–758 (AYAS…NENQ). A compositionally biased stretch (low complexity) spans 41-55 (QQRQQQQQQQQQQQQ). The 33-residue stretch at 73 to 105 (CKNTLNEYIFDFLTKSSLKNTAAAFAQDAHLDR) folds into the LisH domain. A compositionally biased stretch (polar residues) spans 270-285 (DFTNVGPTQNRSQNVT). Low complexity predominate over residues 307-317 (NNNTTNNTTNN). Residues 318-340 (KSPVNQPKSLKTMHSTDKPNNVP) show a composition bias toward polar residues. Residues 341–353 (TSKSTRSRSATSK) are compositionally biased toward low complexity. Residues 354–370 (AKGKVKAGLVAKRRRKN) are compositionally biased toward basic residues. 2 stretches are compositionally biased toward polar residues: residues 371–396 (NTAT…TTSE) and 460–480 (KAST…NSVV). Basic residues predominate over residues 482–497 (GKKRSPPNTRVSRRKS). 2 stretches are compositionally biased toward polar residues: residues 584–593 (SKVSASSPLS) and 660–675 (GNDS…TLST).

Belongs to the FLO8 family.

It is found in the nucleus. Its function is as follows. Required for diploid filamentous growth, haploid invasive growth and flocculation. Putative transcriptional activator of FLO1. The polypeptide is Transcriptional activator FLO8 (FLO8) (Saccharomyces cerevisiae (strain ATCC 204508 / S288c) (Baker's yeast)).